A 151-amino-acid chain; its full sequence is Large ribosomal subunit protein uL13 (151 aa).

Belongs to the universal ribosomal protein uL13 family. Part of the 50S ribosomal subunit.

Its function is as follows. This protein is one of the early assembly proteins of the 50S ribosomal subunit, although it is not seen to bind rRNA by itself. It is important during the early stages of 50S assembly. The chain is Large ribosomal subunit protein uL13 from Synechococcus sp. (strain JA-3-3Ab) (Cyanobacteria bacterium Yellowstone A-Prime).